A 403-amino-acid polypeptide reads, in one-letter code: G-protein coupled receptor family C group 5 member B (403 aa).

The N-terminal stretch at 1–28 (MFVASERKMRAHQVLTFLLLFVITSVAS) is a signal peptide. Residues 29–56 (ENASTSRGCGLDLLPQYVSLCDLDAIWG) lie on the Extracellular side of the membrane. N-linked (GlcNAc...) asparagine glycosylation is present at Asn-30. Residues 57 to 77 (IVVEAVAGAGALITLLLMLIL) form a helical membrane-spanning segment. The Cytoplasmic segment spans residues 78–94 (LVRLPFIKEKEKKSPVG). A helical transmembrane segment spans residues 95–115 (LHFLFLLGTLGLFGLTFAFII). Topologically, residues 116-126 (QEDETICSVRR) are extracellular. The chain crosses the membrane as a helical span at residues 127–147 (FLWGVLFALCFSCLLSQAWRV). Topologically, residues 148 to 162 (RRLVRHGTGPAGWQL) are cytoplasmic. Residues 163-183 (VGLALCLMLVQVIIAVEWLVL) form a helical membrane-spanning segment. Topologically, residues 184-199 (TVLRDTRPACAYEPMD) are extracellular. A helical membrane pass occupies residues 200 to 220 (FVMALIYDMVLLVVTLGLALF). At 221 to 234 (TLCGKFKRWKLNGA) the chain is on the cytoplasmic side. Residues 235–255 (FLLITAFLSVLIWVAWMTMYL) traverse the membrane as a helical segment. Over 256–271 (FGNVKLQQGDAWNDPT) the chain is Extracellular. Residues 272–292 (LAITLAASGWVFVIFHAIPEI) form a helical membrane-spanning segment. The Cytoplasmic segment spans residues 293–403 (HCTLLPALQE…PPSHTGRHLW (111 aa)). The segment at 349–371 (GFPNGSLGKRPSGSLGKRPSAPF) is disordered. The residue at position 354 (Ser-354) is a Phosphoserine.

The protein belongs to the G-protein coupled receptor 3 family. Expression is high in kidney, pancreas, and testis, medium in brain, heart, prostate, small intestine, and spleen, low in liver, placenta, skeletal muscle, colon, ovary, and thymus, and not detectable in lung and peripheral leukocyte. According to PubMed:10945465, highly expressed in most brain areas examined, with the highest levels observed in corpus callosum, caudate nucleus, putamen, substantia nigra, thalamus, hippocampus, and spinal cord as well as in dorsal root ganglia (DRG). Expressed in glia limitans, ependymal cells, astrocyte cell bodies, the perivascular region in astrocyte endfeet, but not in neurons. In the periphery, expression levels are relatively low, compared to the CNS, with the strongest expression detected in pancreas, testis, uterus, and stomach.

The protein resides in the cell membrane. It is found in the cytoplasmic vesicle membrane. G-protein coupled receptor involved in the regulation of cell volume. In Homo sapiens (Human), this protein is G-protein coupled receptor family C group 5 member B (GPRC5B).